Reading from the N-terminus, the 121-residue chain is NAD(P)H-quinone oxidoreductase subunit M (121 aa).

It belongs to the complex I NdhM subunit family. NDH-1 can be composed of about 15 different subunits; different subcomplexes with different compositions have been identified which probably have different functions.

It is found in the cellular thylakoid membrane. It catalyses the reaction a plastoquinone + NADH + (n+1) H(+)(in) = a plastoquinol + NAD(+) + n H(+)(out). It carries out the reaction a plastoquinone + NADPH + (n+1) H(+)(in) = a plastoquinol + NADP(+) + n H(+)(out). NDH-1 shuttles electrons from an unknown electron donor, via FMN and iron-sulfur (Fe-S) centers, to quinones in the respiratory and/or the photosynthetic chain. The immediate electron acceptor for the enzyme in this species is believed to be plastoquinone. Couples the redox reaction to proton translocation, and thus conserves the redox energy in a proton gradient. Cyanobacterial NDH-1 also plays a role in inorganic carbon-concentration. This is NAD(P)H-quinone oxidoreductase subunit M from Nostoc punctiforme (strain ATCC 29133 / PCC 73102).